The primary structure comprises 299 residues: MQSPLSLCLFAPEHVAHRLRSIFQGDRHYLSTFQALDDFCAFLEDKPERIDCLLVYYEANSLPVLNRLYEQGRLLPIILLEPSPSALAKTTDEHPTIVYHNAEIHLPESQWSELPTVVDRAIAHYLHLGPICTLPNQTETIPAPIVDESSQSFLLLQQRRLADKLKERLGYLGVYYKRKPSHFYRNFSPQEKQEYLEDLSSQYREIILSYFSDEGTVNDLLDQFVNQAFFADLAISQILEIHMELMDEFSQHLKLEGRSEEVLLDYRLVLIDILAHLGEMYRRSIPREDIPFDVYYQTD.

The segment at 1–135 (MQSPLSLCLF…LHLGPICTLP (135 aa)) is psR domain, binds oxidized quinones. The KaiA N-terminal domain maps to 1–169 (MQSPLSLCLF…RLADKLKERL (169 aa)). The flexible linker stretch occupies residues 170 to 178 (GYLGVYYKR). Positions 179–287 (KPSHFYRNFS…GEMYRRSIPR (109 aa)) constitute a KaiA C-terminal domain.

The protein belongs to the KaiA family. As to quaternary structure, homodimer. The KaiABC1 complex composition changes during the circadian cycle to control KaiC1 phosphorylation. Complexes KaiC1(6), KaiA(2-4):KaiC1(6), KaiB(6):KaiC1(6) and KaiC1(6):KaiB(6):KaiA(12) are among the most important forms, many form cooperatively. KaiA and CikA bind to the same region of the KaiB(fs) form and therefore compete. Interacts with KaiC1 but not KaiC2 or KaiC3. Interacts with itself, not seen to interact with other Kai proteins.

Its function is as follows. Key component of the KaiABC oscillator complex, which constitutes the main circadian regulator in cyanobacteria. Complex composition changes during the circadian cycle to control KaiC phosphorylation. KaiA stimulates KaiC autophosphorylation, while KaiB sequesters KaiA, leading to KaiC autodephosphorylation. KaiA binding to the KaiC CII domain during the subjective day yields KaiA(2-4):KaiC(6) complexes which stimulate KaiC autophosphorylation. Phospho-Ser-431 KaiC accumulation triggers binding of KaiB during the subjective night to form the KaiB(6):KaiC(6) complex, leading to changes in the output regulators CikA and SasA. KaiB(6):KaiC(6) formation exposes a site for KaiA binding on KaiB that sequesters KaiA from KaiC's CII domain, making the KaiC(6):KaiB(6):KaiA(12) complex resulting in KaiC autodephosphorylation. Complete dephosphorylation of KaiC leads to dissociation of KaiA(2):KaiB(1), completing 1 cycle of the Kai oscillator. Component of the oscillator and circadian clock in this organism, enhances fitness in a rhythmic environment. Stimulates KaiC1 to autophosphorylate, has no effect on the kinase activity of KaiC2 or KaiC3. In terms of biological role, binds oxidized quinones via the N-terminal PsR domain, allowing it to sense redox changes and possibly mediate clock input. This Synechocystis sp. (strain ATCC 27184 / PCC 6803 / Kazusa) protein is Circadian clock oscillator protein KaiA.